Consider the following 428-residue polypeptide: MFDEPIISSFVFTNEETTQTFHHQWFSQGQLHECATCYSSIDADEPPSQHWLRGGEASQGLHLTKQQQAVMDIIEARQIETFFFCDESSKDKLEHFMGETCARGIPELLRWMFQNNTVAVEFNLACYVNAMDQVLIFQSGSLRADHHYDVDESVGVVYEMLMQRIENYLNCSSEYGMAECSITRLKVQVKRIRVEADGQSADSSVFALPLQLQEEEGLTATTGCSTSEAELASLRSAYLKHFRECNGYFPPNMRVNLYGLQQCKTTKELYVVPYHISETLQQLPNKNFLILNNIMGQFQRLHELSTPVNSIERDQTSSPLKDLHCRRCRTQFSRRSKLHIHQKLRCGQDFSVDSMHADIVEIYEQCLPISRSVFQHACYGITKPKTMMRKGQFVPIECDWRSESSVKVQHGPCVVISNAQHNSPCKFY.

The segment at 325 to 346 adopts a C3H1-type zinc-finger fold; the sequence is CRRCRTQFSRRSKLHIHQKLRC.

The chain is Protein terminus (term) from Drosophila melanogaster (Fruit fly).